Here is a 242-residue protein sequence, read N- to C-terminus: MTFHGDAEYASEPDGMSKSGAIGLSRDNVPFSHGRAIFINPVPFKPSSTSSSVYSFKTSFYFVISPRPKNPNPGHGLAFIIVPNDRNDSASGLGYLSLVNRFSNGNPKNHLFAVEFDVFKDKSLGDINDNHIGINNNSVNSTVSKKAGYWYQSKIEGKNRWLFKELKLSGNGYRAWIEYENGKVTVTIGRSQEKPKRPLIEARVDLSKVFLEKMYVGFAGSMGRGVERHEILDWSFENSAKD.

The tract at residues 3-237 (FHGDAEYASE…RHEILDWSFE (235 aa)) is legume-lectin like. Residue S207 is modified to Phosphoserine.

This sequence belongs to the leguminous lectin family.

This is Lectin-like protein At1g53060 from Arabidopsis thaliana (Mouse-ear cress).